The chain runs to 132 residues: Small ribosomal subunit protein uS11 (132 aa).

It belongs to the universal ribosomal protein uS11 family. In terms of assembly, part of the 30S ribosomal subunit. Interacts with proteins S7 and S18. Binds to IF-3.

Its function is as follows. Located on the platform of the 30S subunit, it bridges several disparate RNA helices of the 16S rRNA. Forms part of the Shine-Dalgarno cleft in the 70S ribosome. This Chlamydia muridarum (strain MoPn / Nigg) protein is Small ribosomal subunit protein uS11.